The sequence spans 390 residues: Elongation factor Tu 2 (390 aa).

A tr-type G domain is found at 10–201 (KPHVNVGTIG…LDEYVAVPPR (192 aa)). Residues 19–26 (GHVDHGKT) are G1. A GTP-binding site is contributed by 19 to 26 (GHVDHGKT). Threonine 26 provides a ligand contact to Mg(2+). Residues 55-59 (GITIA) form a G2 region. The interval 76–79 (DCPG) is G3. GTP contacts are provided by residues 76–80 (DCPGH) and 131–134 (NKAD). A G4 region spans residues 131-134 (NKAD). The G5 stretch occupies residues 168-170 (SAL).

This sequence belongs to the TRAFAC class translation factor GTPase superfamily. Classic translation factor GTPase family. EF-Tu/EF-1A subfamily. Monomer.

The protein localises to the cytoplasm. The enzyme catalyses GTP + H2O = GDP + phosphate + H(+). In terms of biological role, GTP hydrolase that promotes the GTP-dependent binding of aminoacyl-tRNA to the A-site of ribosomes during protein biosynthesis. In Wolbachia pipientis wMel, this protein is Elongation factor Tu 2.